Reading from the N-terminus, the 782-residue chain is Endonuclease MutS2 (782 aa).

An ATP-binding site is contributed by 336 to 343 (GPNTGGKT). The region spanning 707–782 (LDLRGYRYED…GFGVTVATLK (76 aa)) is the Smr domain.

It belongs to the DNA mismatch repair MutS family. MutS2 subfamily. Homodimer. Binds to stalled ribosomes, contacting rRNA.

Functionally, endonuclease that is involved in the suppression of homologous recombination and thus may have a key role in the control of bacterial genetic diversity. In terms of biological role, acts as a ribosome collision sensor, splitting the ribosome into its 2 subunits. Detects stalled/collided 70S ribosomes which it binds and splits by an ATP-hydrolysis driven conformational change. Acts upstream of the ribosome quality control system (RQC), a ribosome-associated complex that mediates the extraction of incompletely synthesized nascent chains from stalled ribosomes and their subsequent degradation. Probably generates substrates for RQC. This Staphylococcus aureus (strain JH1) protein is Endonuclease MutS2.